An 863-amino-acid chain; its full sequence is DNA mismatch repair protein MutS (863 aa).

617–624 (GPNMGGKS) lines the ATP pocket.

Belongs to the DNA mismatch repair MutS family.

Its function is as follows. This protein is involved in the repair of mismatches in DNA. It is possible that it carries out the mismatch recognition step. This protein has a weak ATPase activity. The sequence is that of DNA mismatch repair protein MutS from Pseudomonas fluorescens (strain SBW25).